Consider the following 204-residue polypeptide: Urease accessory protein UreG (204 aa).

12–19 provides a ligand contact to GTP; it reads GPVGSGKT.

The protein belongs to the SIMIBI class G3E GTPase family. UreG subfamily. Homodimer. UreD, UreF and UreG form a complex that acts as a GTP-hydrolysis-dependent molecular chaperone, activating the urease apoprotein by helping to assemble the nickel containing metallocenter of UreC. The UreE protein probably delivers the nickel.

The protein localises to the cytoplasm. Facilitates the functional incorporation of the urease nickel metallocenter. This process requires GTP hydrolysis, probably effectuated by UreG. This Pseudomonas fluorescens (strain SBW25) protein is Urease accessory protein UreG.